The primary structure comprises 227 residues: uncharacterized protein (227 aa).

Residues 52-100 adopt a coiled-coil conformation; it reads NKRAKLYRERNKAKLKEKQHKWYHKGGGKEHKKLYDKINLEKSNMRDKN.

Belongs to the mimivirus L246/L426 family.

This is an uncharacterized protein from Acanthamoeba polyphaga mimivirus (APMV).